We begin with the raw amino-acid sequence, 529 residues long: Arginine--tRNA ligase (529 aa).

Positions 113 to 123 (ANPTGPLHIGH) match the 'HIGH' region motif.

The protein belongs to the class-I aminoacyl-tRNA synthetase family. In terms of assembly, monomer.

The protein localises to the cytoplasm. It carries out the reaction tRNA(Arg) + L-arginine + ATP = L-arginyl-tRNA(Arg) + AMP + diphosphate. The sequence is that of Arginine--tRNA ligase from Campylobacter curvus (strain 525.92).